The primary structure comprises 110 residues: uncharacterized protein (110 aa).

Residues 16-46 are a coiled coil; the sequence is ELDKLRECEERLSVIEKQKQSSKQESEETYI. Residues 85-96 show a composition bias toward basic and acidic residues; it reads EEKDKKCQRKPE. Residues 85 to 110 are disordered; the sequence is EEKDKKCQRKPEAPSTPAVTIRSKRQ.

This is an uncharacterized protein from Bacillus subtilis (strain 168).